The sequence spans 164 residues: ATP synthase subunit b 2 (164 aa).

A helical membrane pass occupies residues 4–24 (TFWAFVGLVLFLALLVYFQIP).

The protein belongs to the ATPase B chain family. In terms of assembly, F-type ATPases have 2 components, F(1) - the catalytic core - and F(0) - the membrane proton channel. F(1) has five subunits: alpha(3), beta(3), gamma(1), delta(1), epsilon(1). F(0) has three main subunits: a(1), b(2) and c(10-14). The alpha and beta chains form an alternating ring which encloses part of the gamma chain. F(1) is attached to F(0) by a central stalk formed by the gamma and epsilon chains, while a peripheral stalk is formed by the delta and b chains.

The protein localises to the cell inner membrane. F(1)F(0) ATP synthase produces ATP from ADP in the presence of a proton or sodium gradient. F-type ATPases consist of two structural domains, F(1) containing the extramembraneous catalytic core and F(0) containing the membrane proton channel, linked together by a central stalk and a peripheral stalk. During catalysis, ATP synthesis in the catalytic domain of F(1) is coupled via a rotary mechanism of the central stalk subunits to proton translocation. In terms of biological role, component of the F(0) channel, it forms part of the peripheral stalk, linking F(1) to F(0). The protein is ATP synthase subunit b 2 of Bartonella tribocorum (strain CIP 105476 / IBS 506).